We begin with the raw amino-acid sequence, 192 residues long: UPF0301 protein Bcen_0382 (192 aa).

It belongs to the UPF0301 (AlgH) family.

This is UPF0301 protein Bcen_0382 from Burkholderia orbicola (strain AU 1054).